Here is a 172-residue protein sequence, read N- to C-terminus: Diphosphoinositol polyphosphate phosphohydrolase 1 (172 aa).

N-acetylmethionine is present on Met-1. Residues Arg-10, 18 to 20 (KKR), and 39 to 41 (SSR) each bind substrate. Residues 17–144 (YKKRAACLCF…VQASYFETLR (128 aa)) enclose the Nudix hydrolase domain. Gly-50 and Glu-66 together coordinate Mg(2+). A Nudix box motif is present at residues 51 to 72 (GGMEPEEEPGTAAVREVCEEAG). The active-site Proton acceptor is Glu-69. Mg(2+) is bound at residue Glu-70. Substrate contacts are provided by residues 89-91 (RKH), Arg-115, and Lys-133.

The protein belongs to the Nudix hydrolase family. DIPP subfamily. As to quaternary structure, monomer. Requires Mg(2+) as cofactor. The cofactor is Mn(2+). Zn(2+) serves as cofactor.

The protein localises to the cytoplasm. Its subcellular location is the nucleus. It catalyses the reaction diphospho-myo-inositol polyphosphate + H2O = myo-inositol polyphosphate + phosphate.. The enzyme catalyses 5-diphospho-1D-myo-inositol 1,2,3,4,6-pentakisphosphate + H2O = 1D-myo-inositol hexakisphosphate + phosphate + H(+). It carries out the reaction 3,5-bis(diphospho)-1D-myo-inositol 1,2,4,6-tetrakisphosphate + H2O = 3-diphospho-1D-myo-inositol 1,2,4,5,6-pentakisphosphate + phosphate + 2 H(+). The catalysed reaction is [phosphate](n+1) + n H2O = (n+1) phosphate + n H(+). It catalyses the reaction P(1),P(5)-bis(5'-adenosyl) pentaphosphate + H2O = ADP + ATP + 2 H(+). The enzyme catalyses P(1),P(6)-bis(5'-adenosyl) hexaphosphate + H2O = 2 ATP + 2 H(+). It carries out the reaction P(1),P(4)-bis(5'-adenosyl) tetraphosphate + H2O = AMP + ATP + 2 H(+). The catalysed reaction is a 5'-end (N(7)-methyl 5'-triphosphoguanosine)-ribonucleoside in mRNA + H2O = N(7)-methyl-GMP + a 5'-end diphospho-ribonucleoside in mRNA + 2 H(+). It catalyses the reaction a 5'-end (N(7)-methyl 5'-triphosphoguanosine)-ribonucleoside in mRNA + H2O = N(7)-methyl-GDP + a 5'-end phospho-ribonucleoside in mRNA + 2 H(+). Cleaves a beta-phosphate from the diphosphate groups in PP-InsP5 (diphosphoinositol pentakisphosphate) and [PP]2-InsP4 (bisdiphosphoinositol tetrakisphosphate), suggesting that it may play a role in signal transduction. InsP6 (inositol hexakisphosphate) is not a substrate. Also able to catalyze the hydrolysis of dinucleoside oligophosphates, with diadenosine 5',5'''-P1,P6-hexaphosphate (Ap6A) and diadenosine 5',5'''- P1,P5-pentaphosphate (Ap5A) being the preferred substrates. The major reaction products are ADP and p4a from Ap6A and ADP and ATP from Ap5A. Also able to hydrolyze 5- phosphoribose 1-diphosphate. Acts as a decapping enzyme that can hydrolyze both monomethylated and unmethylated capped RNAs. Hydrolyzes monomethylated capped RNA after both the alpha- and beta-phosphates generating m7GMP + ppRNA and m7GDP + pRNA. Modulates the stability of a subset of mRNAs implicated in cell motility. Divalent cations zinc, magnesium and manganese determine its substrate specificity. Exhibits diphosphoinositol polyphosphate phosphohydrolase in the presence of magnesium ions, diadenosine hexaphosphate hydrolase activity in the presence of manganese ions and endopolyphosphatase activity in the presence of zinc ions. Plays an important role in limiting DNA damage and maintaining cell survival upon oxidative stress via its endopolyphosphatase activity. This chain is Diphosphoinositol polyphosphate phosphohydrolase 1, found in Bos taurus (Bovine).